The sequence spans 356 residues: GDP-mannose:di-myo-inositol-1,3'-phosphate beta-1,2-mannosyltransferase (356 aa).

Belongs to the MDIP synthase family. The cofactor is Mg(2+).

It carries out the reaction bis(myo-inositol) 1,3'-phosphate + GDP-alpha-D-mannose = 2-O-(beta-D-mannosyl)-bis(myo-inositol) 1,3'-phosphate + GDP + H(+). The enzyme catalyses 2-O-(beta-D-mannosyl)-bis(myo-inositol) 1,3'-phosphate + GDP-alpha-D-mannose = 2-O-(beta-D-mannosyl-(1-&gt;2)-beta-D-mannosyl)-bis(myo-inositol) 1,3'-phosphate + GDP + H(+). It catalyses the reaction bis(myo-inositol) 1,3'-phosphate + 2 GDP-alpha-D-mannose = 2-O-(beta-D-mannosyl-(1-&gt;2)-beta-D-mannosyl)-bis(myo-inositol) 1,3'-phosphate + 2 GDP + 2 H(+). In terms of biological role, catalyzes the transfer of the mannosyl group from GDP-mannose to di-myo-inositol-1,3'-phosphate (DIP), producing mannosyl-di-myo-inositol phosphate (MDIP). Can also use MDIP as an acceptor of a second mannose residue, yielding di-mannosyl-di-myo-inositol phosphate (MMDIP). This chain is GDP-mannose:di-myo-inositol-1,3'-phosphate beta-1,2-mannosyltransferase, found in Aquifex aeolicus (strain VF5).